Here is a 441-residue protein sequence, read N- to C-terminus: Amino-acid acetyltransferase (441 aa).

In terms of domain architecture, N-acetyltransferase spans 295 to 434 (EQVRRATIND…QELYNYQRRS (140 aa)).

Belongs to the acetyltransferase family. ArgA subfamily. In terms of assembly, homohexamer.

The protein localises to the cytoplasm. The enzyme catalyses L-glutamate + acetyl-CoA = N-acetyl-L-glutamate + CoA + H(+). It functions in the pathway amino-acid biosynthesis; L-arginine biosynthesis; N(2)-acetyl-L-ornithine from L-glutamate: step 1/4. The polypeptide is Amino-acid acetyltransferase (Yersinia pseudotuberculosis serotype O:1b (strain IP 31758)).